The chain runs to 242 residues: MSKSRLTVFSFVRRFLLRLMVVLAIFWGGGIALFSVAPVPFSAVMVERQVSAWLHGNFRYVAHSDWVSMDQISPWMGLAVIAAEDQKFPEHWGFDVASIEQALAHNERNENRIRGASTISQQTAKNLFLWDGRSWVRKGLEAGLTLGIETVWSKKRILTVYLNIAEFGDGVFGVEAAAQRYFHKPASKLTRSEAALLAAVLPNPLRFKVSAPSGYVRSRQAWILRQMYQLGGEPFMQQHQLD.

The helical transmembrane segment at 19–39 threads the bilayer; it reads LMVVLAIFWGGGIALFSVAPV.

It belongs to the glycosyltransferase 51 family.

The protein resides in the cell inner membrane. The catalysed reaction is [GlcNAc-(1-&gt;4)-Mur2Ac(oyl-L-Ala-gamma-D-Glu-L-Lys-D-Ala-D-Ala)](n)-di-trans,octa-cis-undecaprenyl diphosphate + beta-D-GlcNAc-(1-&gt;4)-Mur2Ac(oyl-L-Ala-gamma-D-Glu-L-Lys-D-Ala-D-Ala)-di-trans,octa-cis-undecaprenyl diphosphate = [GlcNAc-(1-&gt;4)-Mur2Ac(oyl-L-Ala-gamma-D-Glu-L-Lys-D-Ala-D-Ala)](n+1)-di-trans,octa-cis-undecaprenyl diphosphate + di-trans,octa-cis-undecaprenyl diphosphate + H(+). It functions in the pathway cell wall biogenesis; peptidoglycan biosynthesis. Its function is as follows. Peptidoglycan polymerase that catalyzes glycan chain elongation from lipid-linked precursors. This Escherichia coli O45:K1 (strain S88 / ExPEC) protein is Biosynthetic peptidoglycan transglycosylase.